The chain runs to 123 residues: Putative iron-sulfur cluster insertion protein ErpA (123 aa).

Residues Cys-51, Cys-115, and Cys-117 each coordinate iron-sulfur cluster.

It belongs to the HesB/IscA family. Homodimer. Iron-sulfur cluster serves as cofactor.

Its function is as follows. Required for insertion of 4Fe-4S clusters. This is Putative iron-sulfur cluster insertion protein ErpA from Bordetella bronchiseptica (strain ATCC BAA-588 / NCTC 13252 / RB50) (Alcaligenes bronchisepticus).